The sequence spans 617 residues: MADLPQKVSNLSINNKENGGDGGKSSYVPPHLRSRGKPSFERSTPKQEDKVTGGDFFRRAGRQTGNNGGFFGFSKERNGGTSANYNRGGSSNYKSSGNRWVNGKHIPGPKNAKLEAELFGVHEDPDYHSSGIKFDNYDDIPVDASGKDVPEPILDFSSPPLDELLMENIKLASFTKPTPVQKYSIPIVTKGRDLMACAQTGSGKTGGFLFPLFTELFRSGPSPVPEKAQSFYSRKGYPSALVLAPTRELATQIFEEARKFTYRSWVRPCVVYGGAPIGNQMREVDRGCDLLVATPGRLNDLLERGKVSLANIKYLVLDEADRMLDMGFEPQIRHIVEECDMPSVENRQTLMFSATFPVDIQHLARDFLDNYIFLSVGRVGSTSENITQRILYVDDMDKKSALLDLLSAEHKGLTLIFVETKRMADQLTDFLIMQNFKATAIHGDRTQAERERALSAFKANVADILVATAVAARGLDIPNVTHVINYDLPSDIDDYVHRIGRTGRAGNTGVATSFFNSNNQNIVKGLMEILNEANQEVPTFLSDLSRQNSRGGRTRGGGGFFNSRNNGSRDYRKHGGNGSFGSTRPRNTGTSNWGSIGGGFRNDNEKNGYGNSNASWW.

The tract at residues 1–90 (MADLPQKVSN…TSANYNRGGS (90 aa)) is disordered. Residues 7 to 17 (KVSNLSINNKE) are compositionally biased toward polar residues. A compositionally biased stretch (basic and acidic residues) spans 38 to 58 (PSFERSTPKQEDKVTGGDFFR). Over residues 79 to 90 (GGTSANYNRGGS) the composition is skewed to polar residues. The Q motif signature appears at 154 to 182 (LDFSSPPLDELLMENIKLASFTKPTPVQK). The 190-residue stretch at 185–374 (IPIVTKGRDL…RDFLDNYIFL (190 aa)) folds into the Helicase ATP-binding domain. Residue 198-205 (AQTGSGKT) coordinates ATP. Residues 318-321 (DEAD) carry the DEAD box motif. The 161-residue stretch at 385-545 (NITQRILYVD…EVPTFLSDLS (161 aa)) folds into the Helicase C-terminal domain. Positions 542 to 617 (SDLSRQNSRG…GYGNSNASWW (76 aa)) are disordered. Residues 580 to 594 (FGSTRPRNTGTSNWG) are compositionally biased toward polar residues.

The protein belongs to the DEAD box helicase family. DDX3/DED1 subfamily.

The protein resides in the cytoplasm. The enzyme catalyses ATP + H2O = ADP + phosphate + H(+). In terms of biological role, ATP-binding RNA helicase involved in translation initiation. Remodels RNA in response to ADP and ATP concentrations by facilitating disruption, but also formation of RNA duplexes. Redundant to DED1, may be required in conditions in which DED1 expression is decreased. The polypeptide is ATP-dependent RNA helicase DBP1 (DBP1) (Saccharomyces cerevisiae (strain YJM789) (Baker's yeast)).